Here is a 115-residue protein sequence, read N- to C-terminus: UPF0738 protein SAV1005 (115 aa).

This sequence belongs to the UPF0738 family.

This is UPF0738 protein SAV1005 from Staphylococcus aureus (strain Mu50 / ATCC 700699).